The following is a 226-amino-acid chain: Calcium-binding protein 1 (226 aa).

Glycine 2 carries the N-myristoyl glycine lipid modification. Residue cysteine 4 is the site of S-palmitoyl cysteine attachment. 4 EF-hand domains span residues 81–116 (EEIEELREAFREFDKDKDGYINCRDLGNCMRTMGYM), 135–152 (GHVDFDDFVELMGPKLLA), 158–193 (IGVKELRDAFREFDTNGDGEISTSELREAMRKLLGH), and 195–226 (VGHRDIEEIIRDVDLNGDGRVDFEEFVRMMSR). Residues aspartate 94, aspartate 96, aspartate 98, tyrosine 100, and aspartate 105 each coordinate Ca(2+). Aspartate 171, asparagine 173, aspartate 175, and glutamate 177 together coordinate Ca(2+). Serine 179 is modified (phosphoserine). Ca(2+) is bound by residues glutamate 182, aspartate 208, asparagine 210, aspartate 212, arginine 214, and glutamate 219.

As to quaternary structure, homodimer. Interacts (via C-terminus) with ITPR1, ITPR2 and ITPR3. This binding is calcium dependent and the interaction correlates with calcium concentration. An additional calcium-independent interaction with the N-terminus of ITPR1 results in a decreased InsP(3) binding to the receptor. Interacts with CACNA1A (via C-terminal CDB motif) in the pre- and postsynaptic membranes. Interacts with CACNA1C (via C-terminal C and IQ motifs). Interacts with CACNA1D. The binding to the C motif is calcium independent whereas the binding to IQ requires the presence of calcium and is mutually exclusive with calmodulin binding. Interacts with TRPC5 (via C-terminus). Interacts (via EF-hands 1 and 2) at microtubules with MAP1LC3B. Interacts with MYO1C. Interacts (via EF-hands 1 and 2) with NSMF (via the central NLS-containing motif region), the interaction occurs in a calcium dependent manner after synaptic NMDA receptor stimulation and prevents nuclear import of NSMF. Interacts with SPACA9. Phosphorylated. The phosphorylation regulates the activity.

The protein localises to the cytoplasm. The protein resides in the cytoskeleton. It is found in the perinuclear region. Its subcellular location is the cell membrane. It localises to the golgi apparatus. The protein localises to the postsynaptic density. Its function is as follows. Modulates calcium-dependent activity of inositol 1,4,5-triphosphate receptors (ITPRs). Inhibits agonist-induced intracellular calcium signaling. Enhances inactivation and does not support calcium-dependent facilitation of voltage-dependent P/Q-type calcium channels. Causes calcium-dependent facilitation and inhibits inactivation of L-type calcium channels by binding to the same sites as calmodulin in the C-terminal domain of CACNA1C, but has an opposite effect on channel function. Suppresses the calcium-dependent inactivation of CACNA1D. Inhibits TRPC5 channels. Prevents NMDA receptor-induced cellular degeneration. Required for the normal transfer of light signals through the retina. The sequence is that of Calcium-binding protein 1 (CABP1) from Bos taurus (Bovine).